The primary structure comprises 333 residues: Glutamyl-tRNA reductase (333 aa).

Substrate is bound by residues 60 to 63 (TCHR), Ser110, 115 to 117 (ETE), and Gln121. Catalysis depends on Cys61, which acts as the Nucleophile. 189–194 (GYSEIN) is a binding site for NADP(+).

Belongs to the glutamyl-tRNA reductase family. As to quaternary structure, homodimer.

It catalyses the reaction (S)-4-amino-5-oxopentanoate + tRNA(Glu) + NADP(+) = L-glutamyl-tRNA(Glu) + NADPH + H(+). It participates in porphyrin-containing compound metabolism; protoporphyrin-IX biosynthesis; 5-aminolevulinate from L-glutamyl-tRNA(Glu): step 1/2. Catalyzes the NADPH-dependent reduction of glutamyl-tRNA(Glu) to glutamate 1-semialdehyde (GSA). The polypeptide is Glutamyl-tRNA reductase (Chlamydia muridarum (strain MoPn / Nigg)).